The following is a 247-amino-acid chain: Probable transcriptional regulatory protein LPC_0711 (247 aa).

The protein belongs to the TACO1 family.

It is found in the cytoplasm. The sequence is that of Probable transcriptional regulatory protein LPC_0711 from Legionella pneumophila (strain Corby).